The following is a 156-amino-acid chain: Small ribosomal subunit protein eS19A (156 aa).

The protein belongs to the eukaryotic ribosomal protein eS19 family.

The chain is Small ribosomal subunit protein eS19A (RpS19a) from Drosophila melanogaster (Fruit fly).